The following is an 843-amino-acid chain: Protein P (843 aa).

The terminal protein domain (TP) stretch occupies residues 1–177 (MPLSYQHFRK…FCGSPYSWEQ (177 aa)). A spacer region spans residues 178–346 (ELQHGRLVFQ…YCLSHIVNLL (169 aa)). 2 disordered regions span residues 218-243 (LKQS…SGSI) and 290-316 (STSK…RSQS). The segment covering 290–299 (STSKRQSSSG) has biased composition (polar residues). The polymerase/reverse transcriptase domain (RT) stretch occupies residues 347–690 (EDWGPCTEHG…YLHLYPVARQ (344 aa)). The 244-residue stretch at 357 to 600 (EHNIRIPRTP…YSLNFMGYVI (244 aa)) folds into the Reverse transcriptase domain. Residues Asp-429, Asp-551, and Asp-552 each contribute to the Mg(2+) site.

Belongs to the hepadnaviridae P protein family.

The catalysed reaction is DNA(n) + a 2'-deoxyribonucleoside 5'-triphosphate = DNA(n+1) + diphosphate. The enzyme catalyses Endonucleolytic cleavage to 5'-phosphomonoester.. With respect to regulation, activated by host HSP70 and HSP40 in vitro to be able to bind the epsilon loop of the pgRNA. Because deletion of the RNase H region renders the protein partly chaperone-independent, the chaperones may be needed indirectly to relieve occlusion of the RNA-binding site by this domain. Inhibited by several reverse-transcriptase inhibitors: Lamivudine, Adefovir and Entecavir. Multifunctional enzyme that converts the viral RNA genome into dsDNA in viral cytoplasmic capsids. This enzyme displays a DNA polymerase activity that can copy either DNA or RNA templates, and a ribonuclease H (RNase H) activity that cleaves the RNA strand of RNA-DNA heteroduplexes in a partially processive 3'- to 5'-endonucleasic mode. Neo-synthesized pregenomic RNA (pgRNA) are encapsidated together with the P protein, and reverse-transcribed inside the nucleocapsid. Initiation of reverse-transcription occurs first by binding the epsilon loop on the pgRNA genome, and is initiated by protein priming, thereby the 5'-end of (-)DNA is covalently linked to P protein. Partial (+)DNA is synthesized from the (-)DNA template and generates the relaxed circular DNA (RC-DNA) genome. After budding and infection, the RC-DNA migrates in the nucleus, and is converted into a plasmid-like covalently closed circular DNA (cccDNA). The activity of P protein does not seem to be necessary for cccDNA generation, and is presumably released from (+)DNA by host nuclear DNA repair machinery. The protein is Protein P of Homo sapiens (Human).